An 863-amino-acid polypeptide reads, in one-letter code: Glycogen phosphorylase (863 aa).

Lys-618 is modified (N6-(pyridoxal phosphate)lysine).

The protein belongs to the glycogen phosphorylase family. The cofactor is pyridoxal 5'-phosphate.

The enzyme catalyses [(1-&gt;4)-alpha-D-glucosyl](n) + phosphate = [(1-&gt;4)-alpha-D-glucosyl](n-1) + alpha-D-glucose 1-phosphate. Functionally, phosphorylase is an important allosteric enzyme in carbohydrate metabolism. Enzymes from different sources differ in their regulatory mechanisms and in their natural substrates. However, all known phosphorylases share catalytic and structural properties. The sequence is that of Glycogen phosphorylase (glgP) from Mycobacterium tuberculosis (strain ATCC 25618 / H37Rv).